The following is a 115-amino-acid chain: Large ribosomal subunit protein P2 (115 aa).

Residue methionine 1 is modified to N-acetylmethionine. A phosphoserine mark is found at serine 17 and serine 19. Lysine 21 carries the post-translational modification N6-acetyllysine; alternate. N6-succinyllysine; alternate is present on lysine 21. The span at 76-90 (APGSAAPAAGSAPAA) shows a compositional bias: low complexity. The disordered stretch occupies residues 76-115 (APGSAAPAAGSAPAAAEEKKDEKKEESEESDDDMGFGLFD). A phosphoserine mark is found at serine 79 and serine 86. Basic and acidic residues predominate over residues 91-101 (AEEKKDEKKEE). Phosphoserine is present on residues serine 102 and serine 105.

Belongs to the eukaryotic ribosomal protein P1/P2 family. As to quaternary structure, heterodimer with RPLP1 at the lateral ribosomal stalk of the large ribosomal subunit.

Its function is as follows. Plays an important role in the elongation step of protein synthesis. This chain is Large ribosomal subunit protein P2 (Rplp2), found in Mus musculus (Mouse).